The chain runs to 367 residues: Probable glutamine synthetase (367 aa).

Positions 30 to 110 (IQATYVWIDG…VMCDTLDHQM (81 aa)) constitute a GS beta-grasp domain. The 251-residue stretch at 117-367 (HRQACAEIMH…TAMIAQSILF (251 aa)) folds into the GS catalytic domain.

The protein belongs to the glutamine synthetase family. In terms of assembly, homooctamer.

Its subcellular location is the cytoplasm. The catalysed reaction is L-glutamate + NH4(+) + ATP = L-glutamine + ADP + phosphate + H(+). In Caenorhabditis elegans, this protein is Probable glutamine synthetase (gln-2).